The primary structure comprises 274 residues: Glucosamine-6-phosphate deaminase (274 aa).

Catalysis depends on Asp-72, which acts as the Proton acceptor; for enolization step. Asp-141 acts as the For ring-opening step in catalysis. Residue His-143 is the Proton acceptor; for ring-opening step of the active site. The active-site For ring-opening step is the Glu-148.

It belongs to the glucosamine/galactosamine-6-phosphate isomerase family. Homohexamer.

The protein resides in the cytoplasm. The enzyme catalyses alpha-D-glucosamine 6-phosphate + H2O = beta-D-fructose 6-phosphate + NH4(+). It functions in the pathway nucleotide-sugar biosynthesis; UDP-N-acetyl-alpha-D-glucosamine biosynthesis; alpha-D-glucosamine 6-phosphate from D-fructose 6-phosphate: step 1/1. Catalyzes the reversible conversion of alpha-D-glucosamine 6-phosphate (GlcN-6P) into beta-D-fructose 6-phosphate (Fru-6P) and ammonium ion, a regulatory reaction step in de novo uridine diphosphate-N-acetyl-alpha-D-glucosamine (UDP-GlcNAc) biosynthesis via hexosamine pathway. The polypeptide is Glucosamine-6-phosphate deaminase (Drosophila pseudoobscura pseudoobscura (Fruit fly)).